Reading from the N-terminus, the 265-residue chain is TATA-box-binding protein (265 aa).

The tract at residues 1–40 (MYNPSQAVPVSLHKNQDNQDGGQQRSHYPQISSQQSQSYL) is disordered. The segment covering 18-29 (NQDGGQQRSHYP) has biased composition (polar residues). 2 tandem repeats follow at residues 91 to 167 (LQNI…ARVV) and 181 to 258 (IQNM…YPIL).

Belongs to the TBP family. Belongs to the TFIID complex together with the TBP-associated factors (TAFs). Binds DNA as monomer.

It localises to the nucleus. Its function is as follows. General transcription factor that functions at the core of the DNA-binding multiprotein factor TFIID. Binding of TFIID to the TATA box is the initial transcriptional step of the pre-initiation complex (PIC), playing a role in the activation of eukaryotic genes transcribed by RNA polymerase II. The polypeptide is TATA-box-binding protein (Strongylocentrotus purpuratus (Purple sea urchin)).